A 313-amino-acid polypeptide reads, in one-letter code: Aspartate carbamoyltransferase catalytic subunit (313 aa).

Carbamoyl phosphate-binding residues include R59 and T60. L-aspartate is bound at residue K87. Positions 109, 137, and 140 each coordinate carbamoyl phosphate. Positions 170 and 224 each coordinate L-aspartate. Carbamoyl phosphate-binding residues include G265 and P266.

The protein belongs to the aspartate/ornithine carbamoyltransferase superfamily. ATCase family. Heterododecamer (2C3:3R2) of six catalytic PyrB chains organized as two trimers (C3), and six regulatory PyrI chains organized as three dimers (R2).

It carries out the reaction carbamoyl phosphate + L-aspartate = N-carbamoyl-L-aspartate + phosphate + H(+). The protein operates within pyrimidine metabolism; UMP biosynthesis via de novo pathway; (S)-dihydroorotate from bicarbonate: step 2/3. In terms of biological role, catalyzes the condensation of carbamoyl phosphate and aspartate to form carbamoyl aspartate and inorganic phosphate, the committed step in the de novo pyrimidine nucleotide biosynthesis pathway. The polypeptide is Aspartate carbamoyltransferase catalytic subunit (Sinorhizobium medicae (strain WSM419) (Ensifer medicae)).